Reading from the N-terminus, the 813-residue chain is Glycerol-3-phosphate acyltransferase (813 aa).

Residues cysteine 304–isoleucine 309 carry the HXXXXD motif motif.

This sequence belongs to the GPAT/DAPAT family.

The protein localises to the cell inner membrane. It carries out the reaction sn-glycerol 3-phosphate + an acyl-CoA = a 1-acyl-sn-glycero-3-phosphate + CoA. It functions in the pathway phospholipid metabolism; CDP-diacylglycerol biosynthesis; CDP-diacylglycerol from sn-glycerol 3-phosphate: step 1/3. The chain is Glycerol-3-phosphate acyltransferase from Actinobacillus succinogenes (strain ATCC 55618 / DSM 22257 / CCUG 43843 / 130Z).